The primary structure comprises 581 residues: Arginine--tRNA ligase (581 aa).

Positions Pro126 to His136 match the 'HIGH' region motif.

It belongs to the class-I aminoacyl-tRNA synthetase family. As to quaternary structure, monomer.

The protein localises to the cytoplasm. It carries out the reaction tRNA(Arg) + L-arginine + ATP = L-arginyl-tRNA(Arg) + AMP + diphosphate. In Shewanella amazonensis (strain ATCC BAA-1098 / SB2B), this protein is Arginine--tRNA ligase.